The chain runs to 379 residues: Diaminopimelate decarboxylase (379 aa).

K48 carries the N6-(pyridoxal phosphate)lysine modification. Residues G214 and 242-245 each bind pyridoxal 5'-phosphate; that span reads EPGR. 3 residues coordinate substrate: R245, R280, and Y284. The Proton donor role is filled by C309. Residues E310 and Y338 each contribute to the substrate site. Y338 is a pyridoxal 5'-phosphate binding site.

Belongs to the Orn/Lys/Arg decarboxylase class-II family. LysA subfamily. In terms of assembly, homodimer. Pyridoxal 5'-phosphate serves as cofactor.

The enzyme catalyses meso-2,6-diaminopimelate + H(+) = L-lysine + CO2. Its pathway is amino-acid biosynthesis; L-lysine biosynthesis via DAP pathway; L-lysine from DL-2,6-diaminopimelate: step 1/1. Functionally, specifically catalyzes the decarboxylation of meso-diaminopimelate (meso-DAP) to L-lysine. The sequence is that of Diaminopimelate decarboxylase from Deinococcus radiodurans (strain ATCC 13939 / DSM 20539 / JCM 16871 / CCUG 27074 / LMG 4051 / NBRC 15346 / NCIMB 9279 / VKM B-1422 / R1).